Here is a 216-residue protein sequence, read N- to C-terminus: Adenylate kinase (216 aa).

Residue 10 to 15 (GAGKGT) participates in ATP binding. Positions 30–59 (STGDIFRKNISEKTPLGVKAKEYMDKGQLV) are NMP. Residues threonine 31, arginine 36, 57–59 (QLV), 85–88 (GFPR), and glutamine 92 each bind AMP. Residues 126-163 (GRRVCPSCGASYHIKFNPPKIEGLCDVCKKEVIQRKDD) are LID. ATP is bound at residue arginine 127. 2 residues coordinate Zn(2+): cysteine 130 and cysteine 133. 136–137 (SY) provides a ligand contact to ATP. The Zn(2+) site is built by cysteine 150 and cysteine 153. The AMP site is built by arginine 160 and arginine 171. Glutamine 199 is a binding site for ATP.

It belongs to the adenylate kinase family. In terms of assembly, monomer.

Its subcellular location is the cytoplasm. The enzyme catalyses AMP + ATP = 2 ADP. The protein operates within purine metabolism; AMP biosynthesis via salvage pathway; AMP from ADP: step 1/1. In terms of biological role, catalyzes the reversible transfer of the terminal phosphate group between ATP and AMP. Plays an important role in cellular energy homeostasis and in adenine nucleotide metabolism. The sequence is that of Adenylate kinase from Clostridium novyi (strain NT).